Here is a 264-residue protein sequence, read N- to C-terminus: Major prion protein (264 aa).

An N-terminal signal peptide occupies residues 1-24 (MVKSHIGSWILVLFVAMWSDVGLC). The interval 25-241 (KKRPKPGGGW…ESEAYYQRGA (217 aa)) is interaction with GRB2, ERI3 and SYN1. The segment at 28-118 (PKPGGGWNTG…QWNKPSKPKT (91 aa)) is disordered. 6 repeat units span residues 54 to 62 (SQGGGGWGQ), 63 to 70 (PHGGGWGQ), 71 to 78 (PHGGGWGQ), 79 to 86 (PHGGGWGQ), 87 to 94 (PHGGGWGQ), and 95 to 103 (PHGGGGWGQ). Residues 54–103 (SQGGGGWGQPHGGGWGQPHGGGWGQPHGGGWGQPHGGGWGQPHGGGGWGQ) form a 6 X 8 AA tandem repeats of P-H-G-G-G-W-G-Q region. Positions 55-107 (QGGGGWGQPHGGGWGQPHGGGWGQPHGGGWGQPHGGGWGQPHGGGGWGQGGTH) are enriched in gly residues. Residues His72, Gly73, Gly74, His80, Gly81, Gly82, His88, Gly89, Gly90, His96, Gly98, and Gly99 each coordinate Cu(2+). A disulfide bridge links Cys190 with Cys225. N-linked (GlcNAc...) asparagine glycans are attached at residues Asn192 and Asn208. A lipid anchor (GPI-anchor amidated alanine) is attached at Ala241. Residues 242–264 (SVILFSSPPVILLISFLIFLIVG) constitute a propeptide, removed in mature form.

This sequence belongs to the prion family. In terms of assembly, monomer and homodimer. Has a tendency to aggregate into amyloid fibrils containing a cross-beta spine, formed by a steric zipper of superposed beta-strands. Soluble oligomers may represent an intermediate stage on the path to fibril formation. Copper binding may promote oligomerization. Interacts with GRB2, APP, ERI3/PRNPIP and SYN1. Mislocalized cytosolically exposed PrP interacts with MGRN1; this interaction alters MGRN1 subcellular location and causes lysosomal enlargement. Interacts with KIAA1191.

It localises to the cell membrane. The protein localises to the golgi apparatus. Functionally, its primary physiological function is unclear. Has cytoprotective activity against internal or environmental stresses. May play a role in neuronal development and synaptic plasticity. May be required for neuronal myelin sheath maintenance. May play a role in iron uptake and iron homeostasis. Soluble oligomers are toxic to cultured neuroblastoma cells and induce apoptosis (in vitro). Association with GPC1 (via its heparan sulfate chains) targets PRNP to lipid rafts. Also provides Cu(2+) or Zn(2+) for the ascorbate-mediated GPC1 deaminase degradation of its heparan sulfate side chains. This Tragelaphus imberbis (Lesser kudu) protein is Major prion protein (PRNP).